Consider the following 286-residue polypeptide: 4-diphosphocytidyl-2-C-methyl-D-erythritol kinase (286 aa).

The active site involves K11. An ATP-binding site is contributed by P93 to S103. D135 is an active-site residue.

Belongs to the GHMP kinase family. IspE subfamily.

It catalyses the reaction 4-CDP-2-C-methyl-D-erythritol + ATP = 4-CDP-2-C-methyl-D-erythritol 2-phosphate + ADP + H(+). It functions in the pathway isoprenoid biosynthesis; isopentenyl diphosphate biosynthesis via DXP pathway; isopentenyl diphosphate from 1-deoxy-D-xylulose 5-phosphate: step 3/6. Its function is as follows. Catalyzes the phosphorylation of the position 2 hydroxy group of 4-diphosphocytidyl-2C-methyl-D-erythritol. This chain is 4-diphosphocytidyl-2-C-methyl-D-erythritol kinase, found in Chlorobium phaeobacteroides (strain BS1).